Here is a 121-residue protein sequence, read N- to C-terminus: DNA-directed RNA polymerase subunit Rpo8 (121 aa).

This sequence belongs to the archaeal Rpo8 RNA polymerase subunit family. In terms of assembly, part of the 13-subunit RNA polymerase complex. In terms of processing, this subunit is phosphorylated.

The protein localises to the cytoplasm. It carries out the reaction RNA(n) + a ribonucleoside 5'-triphosphate = RNA(n+1) + diphosphate. Functionally, DNA-dependent RNA polymerase (RNAP) catalyzes the transcription of DNA into RNA using the four ribonucleoside triphosphates as substrates. The chain is DNA-directed RNA polymerase subunit Rpo8 from Sulfolobus acidocaldarius (strain ATCC 33909 / DSM 639 / JCM 8929 / NBRC 15157 / NCIMB 11770).